A 246-amino-acid chain; its full sequence is Azurocidin (246 aa).

Positions 1 to 19 (MPALRFLALLASLLATSRV) are cleaved as a signal peptide. A propeptide spanning residues 20–26 (GLATLAD) is cleaved from the precursor. The Peptidase S1 domain occupies 27-242 (IVGGRRAQPQ…FRNWIDSVLN (216 aa)). Residues Cys52 and Cys68 are joined by a disulfide bond. Residues Asn139 and Asn170 are each glycosylated (N-linked (GlcNAc...) asparagine). Cystine bridges form between Cys148/Cys205 and Cys178/Cys184. Positions 245–246 (PA) are excised as a propeptide.

This sequence belongs to the peptidase S1 family. Elastase subfamily.

Its subcellular location is the cytoplasmic granule membrane. This is a neutrophil granule-derived antibacterial and monocyte- and fibroblast-specific chemotactic glycoprotein. Binds heparin. This is Azurocidin from Sus scrofa (Pig).